Here is a 470-residue protein sequence, read N- to C-terminus: Glutamyl-tRNA reductase (470 aa).

Residues 49-52 (TCNR), S109, 114-116 (ESQ), and Q120 contribute to the substrate site. Residue C50 is the Nucleophile of the active site. 223–228 (GAGAVG) serves as a coordination point for NADP(+).

It belongs to the glutamyl-tRNA reductase family. Homodimer.

It carries out the reaction (S)-4-amino-5-oxopentanoate + tRNA(Glu) + NADP(+) = L-glutamyl-tRNA(Glu) + NADPH + H(+). The protein operates within porphyrin-containing compound metabolism; protoporphyrin-IX biosynthesis; 5-aminolevulinate from L-glutamyl-tRNA(Glu): step 1/2. Catalyzes the NADPH-dependent reduction of glutamyl-tRNA(Glu) to glutamate 1-semialdehyde (GSA). The protein is Glutamyl-tRNA reductase of Frankia alni (strain DSM 45986 / CECT 9034 / ACN14a).